The chain runs to 221 residues: Chaperone protein TorD (221 aa).

This sequence belongs to the TorD/DmsD family. TorD subfamily.

The protein resides in the cytoplasm. Its function is as follows. Involved in the biogenesis of TorA. Acts on TorA before the insertion of the molybdenum cofactor and, as a result, probably favors a conformation of the apoenzyme that is competent for acquiring the cofactor. This chain is Chaperone protein TorD, found in Shewanella pealeana (strain ATCC 700345 / ANG-SQ1).